The chain runs to 98 residues: Alpha-elicitin capsicein (98 aa).

3 disulfides stabilise this stretch: Cys-3–Cys-71, Cys-27–Cys-56, and Cys-51–Cys-95.

The protein belongs to the elicitin family.

It localises to the secreted. Induces local and distal defense responses (incompatible hypersensitive reaction) in plants from the solanaceae and cruciferae families. Elicits leaf necrosis and causes the accumulation of pathogenesis-related proteins. Might interact with the lipidic molecules of the plasma membrane. The chain is Alpha-elicitin capsicein from Phytophthora capsici.